The primary structure comprises 271 residues: Putative phosphoenolpyruvate synthase regulatory protein (271 aa).

152–159 contacts ADP; sequence GVSRSGKT.

This sequence belongs to the pyruvate, phosphate/water dikinase regulatory protein family. PSRP subfamily.

The catalysed reaction is [pyruvate, water dikinase] + ADP = [pyruvate, water dikinase]-phosphate + AMP + H(+). It catalyses the reaction [pyruvate, water dikinase]-phosphate + phosphate + H(+) = [pyruvate, water dikinase] + diphosphate. Bifunctional serine/threonine kinase and phosphorylase involved in the regulation of the phosphoenolpyruvate synthase (PEPS) by catalyzing its phosphorylation/dephosphorylation. This chain is Putative phosphoenolpyruvate synthase regulatory protein, found in Thiocapsa roseopersicina.